The sequence spans 145 residues: Large ribosomal subunit protein uL15 (145 aa).

Positions 1 to 11 (MELHSLKSTPG) are enriched in polar residues. The segment at 1-48 (MELHSLKSTPGSRKEKHRKGRGHAAGKGKQAGKGQSGQRKRSKVRLGF) is disordered. The segment covering 14–26 (KEKHRKGRGHAAG) has biased composition (basic residues).

Belongs to the universal ribosomal protein uL15 family. In terms of assembly, part of the 50S ribosomal subunit.

In terms of biological role, binds to the 23S rRNA. In Mycoplasmopsis pulmonis (strain UAB CTIP) (Mycoplasma pulmonis), this protein is Large ribosomal subunit protein uL15.